The primary structure comprises 165 residues: RNA pyrophosphohydrolase (165 aa).

The Nudix hydrolase domain maps to 6 to 149 (GYRPNVGIII…KQSVYHQALT (144 aa)). Positions 38-59 (GGVRENETPQQAVFRELKEEVG) match the Nudix box motif.

This sequence belongs to the Nudix hydrolase family. RppH subfamily. The cofactor is a divalent metal cation.

In terms of biological role, accelerates the degradation of transcripts by removing pyrophosphate from the 5'-end of triphosphorylated RNA, leading to a more labile monophosphorylated state that can stimulate subsequent ribonuclease cleavage. This Hydrogenovibrio crunogenus (strain DSM 25203 / XCL-2) (Thiomicrospira crunogena) protein is RNA pyrophosphohydrolase.